The following is a 374-amino-acid chain: Protein Brevis radix-like 2 (374 aa).

Disordered stretches follow at residues 12–43 (NTNN…IKSL) and 57–80 (AYKS…ADSD). The segment covering 65–80 (SGSSNQNKNRSYADSD) has biased composition (polar residues). Residues 143–198 (KEWVAQVEPGVLITFVSLPEGGNDMKRIRFSREMFDKWQAQKWWAENFDKVMELYN) enclose the BRX 1 domain. The segment at 205-316 (QSVPLPTPPR…EELSVSNASD (112 aa)) is disordered. Polar residues-rich tracts occupy residues 246–259 (SSGS…TQTQ) and 267–288 (GLAT…SSVD). A compositionally biased stretch (basic and acidic residues) spans 289–307 (ESARSSFSREEEEADHSGE). The 56-residue stretch at 319–374 (TEWVEQDEAGVYITIRALPDGTRELRRVRFSREKFGETNARLWWEQNRARIQQQYL) folds into the BRX 2 domain.

This sequence belongs to the BRX family. Expressed in roots.

Its subcellular location is the nucleus. In Arabidopsis thaliana (Mouse-ear cress), this protein is Protein Brevis radix-like 2 (BRXL2).